The sequence spans 341 residues: Phenylalanine--tRNA ligase alpha subunit (341 aa).

Position 256 (Glu256) interacts with Mg(2+).

The protein belongs to the class-II aminoacyl-tRNA synthetase family. Phe-tRNA synthetase alpha subunit type 1 subfamily. As to quaternary structure, tetramer of two alpha and two beta subunits. Requires Mg(2+) as cofactor.

It is found in the cytoplasm. It carries out the reaction tRNA(Phe) + L-phenylalanine + ATP = L-phenylalanyl-tRNA(Phe) + AMP + diphosphate + H(+). This chain is Phenylalanine--tRNA ligase alpha subunit, found in Chlamydia felis (strain Fe/C-56) (Chlamydophila felis).